The following is a 334-amino-acid chain: MTKPIVFSGAQPSGELTIGNYMGALRQWVNMQDDYHCIYCIVDQHAITVRQDAQQLRKATLDTLALYLACGIDPEKSTIFVQSHVPEHAQLGWALNCYTYFGELSRMTQFKDKSARYAENINAGLFDYPVLMAADILLYQTNLVPVGEDQKQHLELSRDIAQRFNGLYGDIFKVPEPFIPKSGARVMSLLEPTKKMSKSDDNRNNVIGLLEDPKSVVKKIKRAVTDSDEPPVVRYDVKEKAGVSNLLDILSAVTGQSIPELEKQFEGKMYGHLKGEVAEAVSGMLSELQERYHRFRNDEAFLQKVMKDGAEKASARAAETLKAVYEAIGFVAKP.

ATP is bound by residues 11–13 (QPS) and 19–20 (GN). The short motif at 12 to 20 (PSGELTIGN) is the 'HIGH' region element. Position 135 (Asp-135) interacts with L-tryptophan. ATP is bound by residues 147 to 149 (GED), Val-186, and 195 to 199 (KMSKS). The 'KMSKS' region signature appears at 195–199 (KMSKS).

This sequence belongs to the class-I aminoacyl-tRNA synthetase family. In terms of assembly, homodimer.

The protein localises to the cytoplasm. It catalyses the reaction tRNA(Trp) + L-tryptophan + ATP = L-tryptophyl-tRNA(Trp) + AMP + diphosphate + H(+). In terms of biological role, catalyzes the attachment of tryptophan to tRNA(Trp). In Salmonella typhi, this protein is Tryptophan--tRNA ligase.